Reading from the N-terminus, the 507-residue chain is MTQAVKLASRVFHRIHLPLQLDASLGSRGSESVLRSLSDIPGPSTLSFLAELFCKGGLSRLHELQVHGAARYGPIWSGSFGTLRTVYVADPTLVEQLLRQESHCPERCSFSSWAEHRRRHQRACGLLTADGEEWQRLRSLLAPLLLRPQAAAGYAGTLDNVVRDLVRRLRRQRGRGSGLPGLVLDVAGEFYKFGLESIGAVLLGSRLGCLEAEVPPDTETFIHAVGSVFVSTLLTMAMPNWLHHLIPGPWARLCRDWDQMFAFAQRHVELREGEAAMRNQGKPEEDMPSGHHLTHFLFREKVSVQSIVGNVTELLLAGVDTVSNTLSWTLYELSRHPDVQTALHSEITAGTRGSCAHPHGTALSQLPLLKAVIKEVLRLYPVVPGNSRVPDRDIRVGNYVIPQDTLVSLCHYATSRDPTQFPDPNSFNPARWLGEGPTPHPFASLPFGFGKRSCIGRRLAELELQMALSQILTHFEVLPEPGALPIKPMTRTVLVPERSINLQFVDR.

C454 provides a ligand contact to heme.

It belongs to the cytochrome P450 family. It depends on heme as a cofactor. In terms of tissue distribution, kidney.

It localises to the mitochondrion membrane. The enzyme catalyses calcidiol + 2 reduced [adrenodoxin] + O2 + 2 H(+) = calcitriol + 2 oxidized [adrenodoxin] + H2O. The catalysed reaction is secalciferol + 2 reduced [adrenodoxin] + O2 + 2 H(+) = calcitetrol + 2 oxidized [adrenodoxin] + H2O. It catalyses the reaction 25-hydroxy-24-oxocalciol + 2 reduced [adrenodoxin] + O2 + 2 H(+) = (1S)-1,25-dihydroxy-24-oxocalciol + 2 oxidized [adrenodoxin] + H2O. It carries out the reaction 25-hydroxyvitamin D2 + 2 reduced [adrenodoxin] + O2 + 2 H(+) = 1alpha,25-dihydroxyvitamin D2 + 2 oxidized [adrenodoxin] + H2O. It participates in hormone biosynthesis; vitamin D biosynthesis. Activated by cardiolipin and dioleoyl phosphatidylethanolamine (DOPE), phospholipids found in the inner mitochondrial membrane. Inhibited by high substrate concentration. Functionally, a cytochrome P450 monooxygenase involved in vitamin D metabolism and in calcium and phosphorus homeostasis. Catalyzes the rate-limiting step in the activation of vitamin D in the kidney, namely the hydroxylation of 25-hydroxyvitamin D3/calcidiol at the C1-alpha position to form the hormonally active form of vitamin D3, 1alpha,25-dihydroxyvitamin D3/calcitriol that acts via the vitamin D receptor (VDR). Has 1-alpha-hydroxylase activity on vitamin D intermediates of the CYP24A1-mediated inactivation pathway. Converts 24R,25-dihydroxyvitamin D3/secalciferol to 1-alpha,24,25-trihydroxyvitamin D3, an active ligand of VDR. Also active on 25-hydroxyvitamin D2. Mechanistically, uses molecular oxygen inserting one oxygen atom into a substrate, and reducing the second into a water molecule, with two electrons provided by NADPH via FDXR/adrenodoxin reductase and FDX1/adrenodoxin. The chain is 25-hydroxyvitamin D-1 alpha hydroxylase, mitochondrial (Cyp27b1) from Mus musculus (Mouse).